Reading from the N-terminus, the 119-residue chain is Large ribosomal subunit protein bL20 (119 aa).

It belongs to the bacterial ribosomal protein bL20 family.

Its function is as follows. Binds directly to 23S ribosomal RNA and is necessary for the in vitro assembly process of the 50S ribosomal subunit. It is not involved in the protein synthesizing functions of that subunit. The chain is Large ribosomal subunit protein bL20 from Dechloromonas aromatica (strain RCB).